The chain runs to 7081 residues: Leucine-rich repeat transmembrane protein CCDC168 (7081 aa).

A helical membrane pass occupies residues 37 to 57 (WVAIFFIILLGIIFEIILMKA). LRR repeat units follow at residues 233–256 (PCPL…VRNQ) and 420–445 (NAEF…SVKA). Residues 717–745 (EDLQSSENSHLQLSNGEELPTSTPKTQRC) form a disordered region. Residues 718 to 742 (DLQSSENSHLQLSNGEELPTSTPKT) show a composition bias toward polar residues. The LRR 3 repeat unit spans residues 865 to 890 (ADTLRIIRLSHSASKQEKLPDEKETQ). Residues 943–1009 (QISSGSSKAP…DPKNPLTMPE (67 aa)) are disordered. A compositionally biased stretch (polar residues) spans 958–970 (VQPQTLSTQTILE). The span at 981–999 (QVEKVKQSTDRPTDRESAG) shows a compositional bias: basic and acidic residues. One copy of the LRR 4 repeat lies at 1050-1075 (LPAVALGSFNNHLLTLPYFKRQEIKK). 2 stretches are compositionally biased toward polar residues: residues 1274–1286 (KCTA…SPIS) and 1295–1304 (LNQTRESYIP). Positions 1274-1304 (KCTADSETPSPISGKSLIGDPLNQTRESYIP) are disordered. The LRR 5 repeat unit spans residues 1501–1527 (NCLTLELHINGQRLQHQTGFEQTTLET). Composition is skewed to basic and acidic residues over residues 1773-1784 (ETEKDTLREKRL) and 1793-1804 (TSPHEDSITSRD). Disordered stretches follow at residues 1773–1804 (ETEK…TSRD), 1954–1973 (KSPH…ESGS), 2008–2031 (STHQ…EGRS), and 2083–2103 (TGKS…NPRR). The segment covering 1964-1973 (ANLTDMESGS) has biased composition (polar residues). An LRR 6 repeat occupies 2373–2397 (KNQINTIQLSERKIILNPKCLTMKE). The disordered stretch occupies residues 2637 to 2680 (GRHSPASEEMKRQNGRLKMADRSSPQGRPLQAKQSAVSQSPDTA). Polar residues predominate over residues 2668–2678 (AKQSAVSQSPD). LRR repeat units lie at residues 2727–2749 (SKIH…KTRA), 2832–2855 (IQQQ…VYDS), 2862–2889 (IKKL…KLEK), 3433–3458 (LSSR…RLEW), and 3630–3653 (ILSL…NVKS). The tract at residues 3730–3756 (SLSHSNSNSRTKAGKDKSGTLKGCLPP) is disordered. The stretch at 3875–3898 (MRGITRFCLSSSTQQELSDTMEKC) is one LRR 12 repeat. Disordered regions lie at residues 4119-4260 (ELSH…DGDK), 4293-4428 (QGII…KQET), 4729-4756 (QESL…LLPQ), 4794-4817 (SPLS…QDRT), 4831-4859 (MPSL…RLAN), 4928-4955 (GVQE…YLNC), 4966-4985 (LGKT…SDSG), and 5191-5212 (QKVK…SPLH). 6 stretches are compositionally biased toward basic and acidic residues: residues 4121–4133 (SHQK…EKAD), 4147–4176 (KAKD…DKGL), 4192–4245 (EPGK…EQQK), 4329–4361 (QKAK…DLKG), 4375–4401 (EPGK…NRDG), and 4415–4426 (EQEKRDGHKSKQ). Polar residues predominate over residues 4731–4743 (SLPSRQTAPTKPT). Basic and acidic residues-rich tracts occupy residues 4746–4756 (LVKKEKQLLPQ) and 4798–4817 (KRKE…QDRT). Residues 5203 to 5212 (KSPSRSSPLH) show a composition bias toward polar residues. The LRR 13 repeat unit spans residues 5311 to 5336 (LSQLELDKETHLGNEMLRLKRPILRR). A disordered region spans residues 5467-5496 (LPDTEKTADAEARSGDVRKGKPHRSQKENR). Over residues 5469–5496 (DTEKTADAEARSGDVRKGKPHRSQKENR) the composition is skewed to basic and acidic residues. The stretch at 5522-5545 (LNAKELVLNINKLEKKVHKDKDEA) is one LRR 14 repeat. 2 disordered regions span residues 5564 to 5583 (LDSG…SSCP) and 5763 to 5792 (QQET…SNDR). The span at 5779–5792 (KFDKPKEDGQSNDR) shows a compositional bias: basic and acidic residues. LRR repeat units follow at residues 5901–5924 (KQAL…LFPP), 6259–6282 (PDLR…ECPS), 6419–6442 (HLES…SLQM), 6552–6575 (HFSV…SYAM), and 6613–6637 (QIDL…TFPK). Disordered regions lie at residues 6859-6878 (CKSH…SPDW) and 6916-6950 (APLT…RSDL). Positions 6860–6871 (KSHKSRKYRSSS) are enriched in basic residues. The segment covering 6937–6950 (HPESQERKKARSDL) has biased composition (basic and acidic residues). An LRR 20 repeat occupies 7012 to 7036 (NRPFFFACVPADSLEVIPKTIRWTI).

It is found in the membrane. The chain is Leucine-rich repeat transmembrane protein CCDC168 from Homo sapiens (Human).